The primary structure comprises 127 residues: Large ribosomal subunit protein bL17 (127 aa).

It belongs to the bacterial ribosomal protein bL17 family. Part of the 50S ribosomal subunit. Contacts protein L32.

The chain is Large ribosomal subunit protein bL17 from Chromohalobacter salexigens (strain ATCC BAA-138 / DSM 3043 / CIP 106854 / NCIMB 13768 / 1H11).